Reading from the N-terminus, the 338-residue chain is Protein SGT1 homolog (338 aa).

Ala2 bears the N-acetylalanine mark. 3 TPR repeats span residues 11-45 (AASR…KPDD), 46-79 (APYY…NPNS), and 80-113 (STAL…NSAD). In terms of domain architecture, CS spans 142 to 231 (QSKIKYDWYQ…PEAVRWEKLE (90 aa)). The SGS domain maps to 249-338 (LYPSSSHYTR…PPDDMEWKKY (90 aa)). Residue Ser254 is modified to Phosphoserine. Thr257 carries the phosphothreonine modification. Lys268 participates in a covalent cross-link: Glycyl lysine isopeptide (Lys-Gly) (interchain with G-Cter in SUMO1); alternate. A Glycyl lysine isopeptide (Lys-Gly) (interchain with G-Cter in SUMO2); alternate cross-link involves residue Lys268. Ser304 bears the Phosphoserine mark.

The protein belongs to the SGT1 family. Probably associates with SCF (SKP1-CUL1-F-box protein) complex through interaction with SKP1. Interacts with S100A6. Interacts with HSP90. Post-translationally, phosphorylated at Ser-254 and Ser-304, dephosphorylation promotes nuclear translocation, most likely due to disruption of the SUGT1-HSP90 complex.

It localises to the cytoplasm. It is found in the nucleus. May play a role in ubiquitination and subsequent proteasomal degradation of target proteins. The polypeptide is Protein SGT1 homolog (Bos taurus (Bovine)).